A 425-amino-acid chain; its full sequence is Dihydroorotase (425 aa).

The Zn(2+) site is built by His-61 and His-63. Substrate is bound by residues 63–65 (HLR) and Asn-95. Residues Lys-146, His-175, His-224, and Asp-293 each contribute to the Zn(2+) site. Position 146 is an N6-carboxylysine (Lys-146). Asp-293 is a catalytic residue. Substrate contacts are provided by residues His-297 and 311 to 312 (PG).

It belongs to the metallo-dependent hydrolases superfamily. DHOase family. Class I DHOase subfamily. Zn(2+) is required as a cofactor.

The enzyme catalyses (S)-dihydroorotate + H2O = N-carbamoyl-L-aspartate + H(+). It participates in pyrimidine metabolism; UMP biosynthesis via de novo pathway; (S)-dihydroorotate from bicarbonate: step 3/3. Catalyzes the reversible cyclization of carbamoyl aspartate to dihydroorotate. This Aeropyrum pernix (strain ATCC 700893 / DSM 11879 / JCM 9820 / NBRC 100138 / K1) protein is Dihydroorotase.